The sequence spans 347 residues: D-alanine--D-alanine ligase (347 aa).

An ATP-grasp domain is found at 134 to 332 (KLYAKDLGVK…LAQSLPKTPK (199 aa)). 161–216 (LIKFNFPFIVKPSNAGSSLGVNVVKEEKELVYALDSAFEYSKEVLIEPFIQGVKEY) contributes to the ATP binding site. Positions 288, 300, and 302 each coordinate Mg(2+).

The protein belongs to the D-alanine--D-alanine ligase family. Mg(2+) is required as a cofactor. Mn(2+) serves as cofactor.

It is found in the cytoplasm. The catalysed reaction is 2 D-alanine + ATP = D-alanyl-D-alanine + ADP + phosphate + H(+). It functions in the pathway cell wall biogenesis; peptidoglycan biosynthesis. In terms of biological role, cell wall formation. The polypeptide is D-alanine--D-alanine ligase (Helicobacter pylori (strain P12)).